A 441-amino-acid polypeptide reads, in one-letter code: MSKKLVTEEMRTQWLPVLEKKSEQIQPLTAENVSVRLLQNQAEWNAKNLGESEGPSSVNANVGKWQPVLIDMAKRLAPNNIAMDFFGVQPLAGPDGQIFALRARQGVGDASNTQQSRKELFMEEAQTNYSGDQTTVHSGDPSGFSQADIEGSGTEVSSYGKAMDTVKAEQLGSPTQPWARVGITIQKATVTAKSRGLYADYSHELRQDMMAIHGEDVDAILSDVMVTEIQAEMNREFIRTMNFTAVRFKKFGTNGVVDVAADVSGRWALEKWKYLVFMLEVEANGVGVDTRRGKANRVLCSPNVASALAMAGMLDYSPALNVQAQLAVDPTGQTFAGVLSNGMRVYIDPYAVAEYITLAYKGATALDAGIYFAPYVPLEMYRTQGETTFAPRMAFKTRYGIAANPFVQIPANQDPQVYVTEDGIAKDTNVYFRKGLIKNLY.

Residues 1-51 (MSKKLVTEEMRTQWLPVLEKKSEQIQPLTAENVSVRLLQNQAEWNAKNLGE) constitute a propeptide that is removed on maturation.

The protein resides in the virion. The sequence is that of Major capsid protein from Serratia marcescens (Serratia marcescens bacteriophage KSP90).